Consider the following 56-residue polypeptide: Large ribosomal subunit protein bL33 (56 aa).

This sequence belongs to the bacterial ribosomal protein bL33 family.

The chain is Large ribosomal subunit protein bL33 from Tropheryma whipplei (strain TW08/27) (Whipple's bacillus).